The primary structure comprises 694 residues: TBC1 domain family member 14 (694 aa).

Residue Ser-92 is modified to Phosphoserine. A compositionally biased stretch (basic and acidic residues) spans Thr-272–Gly-289. The tract at residues Thr-272 to Leu-305 is disordered. Ser-296 is modified (phosphoserine). The Rab-GAP TBC domain maps to Gly-402–Gly-612.

As to quaternary structure, interacts with ULK1. May interact with RAB11A and RAB11B, but does not exhibit any GTPase-activating activity toward these proteins. Interacts with TRAPPC8.

The protein localises to the golgi apparatus. Its subcellular location is the cis-Golgi network. It localises to the trans-Golgi network. In terms of biological role, plays a role in the regulation of starvation-induced autophagosome formation. Together with the TRAPPIII complex, regulates a constitutive trafficking step from peripheral recycling endosomes to the early Golgi, maintaining the cycling pool of ATG9 required for initiation of autophagy. This chain is TBC1 domain family member 14 (Tbc1d14), found in Mus musculus (Mouse).